Here is a 288-residue protein sequence, read N- to C-terminus: Bifunctional protein FolD (288 aa).

NADP(+) contacts are provided by residues 166–168, Ser191, and Ile232; that span reads GRS.

Belongs to the tetrahydrofolate dehydrogenase/cyclohydrolase family. Homodimer.

It catalyses the reaction (6R)-5,10-methylene-5,6,7,8-tetrahydrofolate + NADP(+) = (6R)-5,10-methenyltetrahydrofolate + NADPH. The enzyme catalyses (6R)-5,10-methenyltetrahydrofolate + H2O = (6R)-10-formyltetrahydrofolate + H(+). It participates in one-carbon metabolism; tetrahydrofolate interconversion. Functionally, catalyzes the oxidation of 5,10-methylenetetrahydrofolate to 5,10-methenyltetrahydrofolate and then the hydrolysis of 5,10-methenyltetrahydrofolate to 10-formyltetrahydrofolate. The protein is Bifunctional protein FolD of Rickettsia rickettsii (strain Iowa).